The chain runs to 1147 residues: Tip elongation aberrant protein 1 (1147 aa).

Over residues 1–16 the composition is skewed to basic residues; sequence MSFLFKRNKGSAHKPT. The disordered stretch occupies residues 1–64; sequence MSFLFKRNKG…TGSGSHITAS (64 aa). The span at 18–32 shows a compositional bias: polar residues; the sequence is PNFSKTSTTPSTSQL. Kelch repeat units follow at residues 94–144, 146–198, 199–253, 254–303, 305–351, and 355–402; these read EIYI…LIGN, FIVF…CLGS, KICL…TFSD, KLYI…VVEG, LYVF…TLSC, and TLVL…SNST. Disordered regions lie at residues 384–403 and 408–547; these read SVPT…NSTG and SAFN…NAQS. Polar residues-rich tracts occupy residues 385–403, 408–465, and 472–489; these read VPTT…NSTG, SAFN…SNDL, and TRSN…LNSH. Over residues 502 to 512 the composition is skewed to low complexity; sequence SSLNSQQLSNQ. Serine 503 is modified (phosphoserine). Polar residues predominate over residues 519-547; it reads VSPTLSFVPSSHSMEQGNGSVASANNAQS. Residues 538–1147 are interaction with tea4; sequence SVASANNAQS…AKEPVHDNEN (610 aa). 4 coiled-coil regions span residues 611–649, 716–838, 879–990, and 1084–1105; these read KLYE…LEKV, QTSS…IIDA, KNNE…ALEE, and IKSL…AKEK. Residues 948 to 1147 form a retention at microtubule cell ends region; the sequence is KALEQRNTGA…AKEPVHDNEN (200 aa).

Major component of the tea1 cell-end complex. Interacts with rax2, tea4 and tip1. Interacts with for3 in the presence of tea4.

It is found in the cytoplasm. Its subcellular location is the cytoskeleton. Functionally, cell polarity protein. Acts as an end marker, directing the growth machinery to the cell poles. Involved in the regulation of microtubular organization, affecting the maintenance of a single central axis. Prevents the curling of microtubule tips around the cell ends and is required for the retention of polarity factors such as pom1, tip1 and tea2 at the cell ends, necessary for the cell to grow in a straight line. Links tip1 and tea4 in a common complex. This chain is Tip elongation aberrant protein 1 (tea1), found in Schizosaccharomyces pombe (strain 972 / ATCC 24843) (Fission yeast).